The following is a 148-amino-acid chain: UPF0178 protein Pcar_2632 (148 aa).

It belongs to the UPF0178 family.

This is UPF0178 protein Pcar_2632 from Syntrophotalea carbinolica (strain DSM 2380 / NBRC 103641 / GraBd1) (Pelobacter carbinolicus).